The following is a 158-amino-acid chain: 3-hydroxyacyl-[acyl-carrier-protein] dehydratase FabZ (158 aa).

The active site involves H57.

This sequence belongs to the thioester dehydratase family. FabZ subfamily.

The protein localises to the cytoplasm. It catalyses the reaction a (3R)-hydroxyacyl-[ACP] = a (2E)-enoyl-[ACP] + H2O. Its function is as follows. Involved in unsaturated fatty acids biosynthesis. Catalyzes the dehydration of short chain beta-hydroxyacyl-ACPs and long chain saturated and unsaturated beta-hydroxyacyl-ACPs. The protein is 3-hydroxyacyl-[acyl-carrier-protein] dehydratase FabZ of Helicobacter acinonychis (strain Sheeba).